The primary structure comprises 297 residues: Large ribosomal subunit protein uL10 (297 aa).

It belongs to the universal ribosomal protein uL10 family. In terms of assembly, part of the 50S ribosomal subunit. Forms part of the ribosomal stalk which helps the ribosome interact with GTP-bound translation factors. Forms a heptameric L10(L12)2(L12)2(L12)2 complex, where L10 forms an elongated spine to which the L12 dimers bind in a sequential fashion.

Forms part of the ribosomal stalk, playing a central role in the interaction of the ribosome with GTP-bound translation factors. This chain is Large ribosomal subunit protein uL10, found in Methanococcus voltae.